Here is a 113-residue protein sequence, read N- to C-terminus: UPF0212 protein MmarC6_1165 (113 aa).

This sequence belongs to the UPF0212 family.

The protein is UPF0212 protein MmarC6_1165 of Methanococcus maripaludis (strain C6 / ATCC BAA-1332).